A 462-amino-acid polypeptide reads, in one-letter code: 3-isopropylmalate dehydratase large subunit (462 aa).

Residues C337, C397, and C400 each coordinate [4Fe-4S] cluster.

The protein belongs to the aconitase/IPM isomerase family. LeuC type 1 subfamily. In terms of assembly, heterodimer of LeuC and LeuD. Requires [4Fe-4S] cluster as cofactor.

It carries out the reaction (2R,3S)-3-isopropylmalate = (2S)-2-isopropylmalate. It participates in amino-acid biosynthesis; L-leucine biosynthesis; L-leucine from 3-methyl-2-oxobutanoate: step 2/4. Functionally, catalyzes the isomerization between 2-isopropylmalate and 3-isopropylmalate, via the formation of 2-isopropylmaleate. In Listeria welshimeri serovar 6b (strain ATCC 35897 / DSM 20650 / CCUG 15529 / CIP 8149 / NCTC 11857 / SLCC 5334 / V8), this protein is 3-isopropylmalate dehydratase large subunit.